The chain runs to 43 residues: Bacteriocin weissellin-A (43 aa).

A disulfide bridge links cysteine 9 with cysteine 14.

It is found in the secreted. In terms of biological role, highly active against Gram-positive bacteria M.flavus strain ATCC 400, M.luteus strain CECT241, C.soprogenes strain NCTC533, L.monocytogenes strain ATCC 19111, L.inocua strain ATCC BAA-680D and S.carnosus strain LMG13564. Less active against B.cereus strain LMG13569, C.thiaminolyticum strain ATCC 15579, E.faecalis strain NCTC8176, L.lactis strain LM0230, L.casei strain ATCC 344, L.lactis strain IL1403, L.jensenii strain ATCC 25258, L.plantarum strain CECT220, L.brevis strain ATCC 8287, L.bulgaricus strain LMG13551, P.acidilactici strain ATCC 25740, P.pentosaceus strain ATCC 33316 and P.pentosaceus strain LMG13560. Weakly active against L.mesenteroides strain ATCC 19254, L.lactis strain ATCC 1454, L.sakei strain CECT906T, L.lactis subsp. cremoris strain MC1363 and L.curvatus strain ATCC 51436. Not active against Gram-negative bacterium S.enteritidis strain ATCC 13076. The mode of action appears to be non-lytic. Inactivated by proteinase K, but insensitive to trypsin, alpha-chymotrypsin, pepsin and papain. The polypeptide is Bacteriocin weissellin-A (Weissella paramesenteroides (Leuconostoc paramesenteroides)).